We begin with the raw amino-acid sequence, 346 residues long: Protein RecA (346 aa).

Gly79 to Thr86 is an ATP binding site.

This sequence belongs to the RecA family.

The protein localises to the cytoplasm. Can catalyze the hydrolysis of ATP in the presence of single-stranded DNA, the ATP-dependent uptake of single-stranded DNA by duplex DNA, and the ATP-dependent hybridization of homologous single-stranded DNAs. It interacts with LexA causing its activation and leading to its autocatalytic cleavage. The chain is Protein RecA from Chlorobaculum tepidum (strain ATCC 49652 / DSM 12025 / NBRC 103806 / TLS) (Chlorobium tepidum).